Here is a 422-residue protein sequence, read N- to C-terminus: Glucose-1-phosphate adenylyltransferase (422 aa).

Alpha-D-glucose 1-phosphate is bound by residues Y109, G175, 190-191, and S208; that span reads EK.

This sequence belongs to the bacterial/plant glucose-1-phosphate adenylyltransferase family. Homotetramer.

The enzyme catalyses alpha-D-glucose 1-phosphate + ATP + H(+) = ADP-alpha-D-glucose + diphosphate. It participates in glycan biosynthesis; glycogen biosynthesis. Its function is as follows. Involved in the biosynthesis of ADP-glucose, a building block required for the elongation reactions to produce glycogen. Catalyzes the reaction between ATP and alpha-D-glucose 1-phosphate (G1P) to produce pyrophosphate and ADP-Glc. This Shewanella amazonensis (strain ATCC BAA-1098 / SB2B) protein is Glucose-1-phosphate adenylyltransferase.